A 318-amino-acid polypeptide reads, in one-letter code: MDDEGARKVDEKCPLCQADRYLNPNMKLLINPECYHKMCESCVDRIFTTGPAQCPTPGCNKILRKAKFREQTFEDAQIEREVDVRKRISRIFNKGQQEFDSLQAYNDYLEEVEILTFNLIYKIDVEETEEKVKQYEKQNRDSIAANSARAAAEARILAQNEILLKRQKQEAREAAIREHQKEKERREQVEQQIIFDLATSGKDPNKIIQLSDSLKKQQENIASSVSNISRSSSILLSDVQQVAEDTTPFSPLAGEKDGSKYFSYSKNTYQDLYLEKVSHEPGRKCGFRIEDCHLRCLYEAFSGIDYDLESLKKLEVAS.

The segment at 13–54 adopts an RING-type zinc-finger fold; sequence CPLCQADRYLNPNMKLLINPECYHKMCESCVDRIFTTGPAQC.

As to quaternary structure, one of the nine subunits forming the core-TFIIH basal transcription factor. Also interacts with skp1 and with the mcs2-mcs6 complex.

The protein resides in the cytoplasm. It is found in the nucleus. Functionally, acts as a component of the general transcription and DNA repair factor IIH (TFIIH or factor B), which is essential for both basal and activated transcription, and is involved in nucleotide excision repair (NER) of damaged DNA. TFIIH has CTD kinase activity and DNA-dependent ATPase activity, and is essential for polymerase II transcription. The sequence is that of RNA polymerase II transcription factor B subunit 3 (pmh1) from Schizosaccharomyces pombe (strain 972 / ATCC 24843) (Fission yeast).